Reading from the N-terminus, the 817-residue chain is Lon protease 1 (817 aa).

One can recognise a Lon N-terminal domain in the interval Val-18–Ile-216. ATP is bound at residue Gly-368–Thr-375. In terms of domain architecture, Lon proteolytic spans Glu-604–Leu-785. Residues Ser-691 and Lys-734 contribute to the active site. The disordered stretch occupies residues Glu-789–Ala-817.

Belongs to the peptidase S16 family. As to quaternary structure, homohexamer. Organized in a ring with a central cavity.

It is found in the cytoplasm. It catalyses the reaction Hydrolysis of proteins in presence of ATP.. In terms of biological role, ATP-dependent serine protease that mediates the selective degradation of mutant and abnormal proteins as well as certain short-lived regulatory proteins. Required for cellular homeostasis and for survival from DNA damage and developmental changes induced by stress. Degrades polypeptides processively to yield small peptide fragments that are 5 to 10 amino acids long. Binds to DNA in a double-stranded, site-specific manner. The protein is Lon protease 1 of Myxococcus xanthus.